The chain runs to 183 residues: Shikimate kinase (183 aa).

25–30 (GAGKTT) is an ATP binding site. Residue T29 coordinates Mg(2+). D47, R71, and G93 together coordinate substrate. R131 is an ATP binding site. Residue R150 coordinates substrate.

The protein belongs to the shikimate kinase family. As to quaternary structure, monomer. Mg(2+) serves as cofactor.

Its subcellular location is the cytoplasm. The catalysed reaction is shikimate + ATP = 3-phosphoshikimate + ADP + H(+). It functions in the pathway metabolic intermediate biosynthesis; chorismate biosynthesis; chorismate from D-erythrose 4-phosphate and phosphoenolpyruvate: step 5/7. In terms of biological role, catalyzes the specific phosphorylation of the 3-hydroxyl group of shikimic acid using ATP as a cosubstrate. In Dechloromonas aromatica (strain RCB), this protein is Shikimate kinase.